An 81-amino-acid polypeptide reads, in one-letter code: Probable antitoxin MazE2 (81 aa).

As to quaternary structure, forms a complex with cognate toxin MazF2.

Functionally, antitoxin component of a type II toxin-antitoxin (TA) system. This is Probable antitoxin MazE2 (mazE2) from Mycobacterium tuberculosis (strain ATCC 25618 / H37Rv).